Here is a 37-residue protein sequence, read N- to C-terminus: Large ribosomal subunit protein bL36c (37 aa).

The protein belongs to the bacterial ribosomal protein bL36 family.

It localises to the plastid. The protein resides in the chloroplast. The chain is Large ribosomal subunit protein bL36c (rpl36) from Chlorella vulgaris (Green alga).